A 420-amino-acid chain; its full sequence is Diaminobutyrate--2-oxoglutarate transaminase (420 aa).

The residue at position 271 (Lys271) is an N6-(pyridoxal phosphate)lysine.

The protein belongs to the class-III pyridoxal-phosphate-dependent aminotransferase family. Pyridoxal 5'-phosphate is required as a cofactor.

The catalysed reaction is L-2,4-diaminobutanoate + 2-oxoglutarate = L-aspartate 4-semialdehyde + L-glutamate. It participates in amine and polyamine biosynthesis; ectoine biosynthesis; L-ectoine from L-aspartate 4-semialdehyde: step 1/3. Functionally, catalyzes reversively the conversion of L-aspartate beta-semialdehyde (ASA) to L-2,4-diaminobutyrate (DABA) by transamination with L-glutamate. This chain is Diaminobutyrate--2-oxoglutarate transaminase (ectB), found in Streptomyces anulatus (Streptomyces chrysomallus).